We begin with the raw amino-acid sequence, 799 residues long: Elongation factor G, mitochondrial (799 aa).

The N-terminal 34 residues, 1 to 34 (MRCPSLTRLPYRAVSGLPRSVVRLQSQNFLTRRC), are a transit peptide targeting the mitochondrion. Positions 97 to 384 (SRVRNIGIAA…GVVDYLPNPA (288 aa)) constitute a tr-type G domain. GTP is bound by residues 106–113 (AHIDSGKT), 182–186 (DTPGH), and 236–239 (NKMD).

It belongs to the TRAFAC class translation factor GTPase superfamily. Classic translation factor GTPase family. EF-G/EF-2 subfamily.

The protein localises to the mitochondrion. The protein operates within protein biosynthesis; polypeptide chain elongation. Mitochondrial GTPase that catalyzes the GTP-dependent ribosomal translocation step during translation elongation. During this step, the ribosome changes from the pre-translocational (PRE) to the post-translocational (POST) state as the newly formed A-site-bound peptidyl-tRNA and P-site-bound deacylated tRNA move to the P and E sites, respectively. Catalyzes the coordinated movement of the two tRNA molecules, the mRNA and conformational changes in the ribosome. The protein is Elongation factor G, mitochondrial (mef1) of Aspergillus flavus (strain ATCC 200026 / FGSC A1120 / IAM 13836 / NRRL 3357 / JCM 12722 / SRRC 167).